Here is a 585-residue protein sequence, read N- to C-terminus: Exonuclease V, mitochondrial (585 aa).

The transit peptide at 1–26 (MLGRTLINKHGFLIHPRRFVHLNDKS) directs the protein to the mitochondrion. [4Fe-4S] cluster is bound by residues cysteine 141, cysteine 549, cysteine 552, and cysteine 558.

The protein belongs to the EXO5 family. In terms of assembly, monomer. Mg(2+) serves as cofactor. Requires [4Fe-4S] cluster as cofactor.

It is found in the mitochondrion. In terms of biological role, single strand DNA specific 5' exonuclease involved in mitochondrial DNA replication and recombination. Releases dinucleotides as main products of catalysis. Has the capacity to slide across 5'double-stranded DNA or 5'RNA sequences and resumes cutting two nucleotides downstream of the double-stranded-to-single-stranded junction or RNA-to-DNA junction, respectively. The protein is Exonuclease V, mitochondrial (EXO5) of Saccharomyces cerevisiae (strain Lalvin EC1118 / Prise de mousse) (Baker's yeast).